The chain runs to 200 residues: Cytochrome c biogenesis ATP-binding export protein CcmA (200 aa).

The region spanning 1–200 (MRLSGRGLRC…TREMRIGAAA (200 aa)) is the ABC transporter domain. Position 35–42 (35–42 (GRNGAGKT)) interacts with ATP.

It belongs to the ABC transporter superfamily. CcmA exporter (TC 3.A.1.107) family. In terms of assembly, the complex is composed of two ATP-binding proteins (CcmA) and two transmembrane proteins (CcmB).

The protein localises to the cell inner membrane. It carries out the reaction heme b(in) + ATP + H2O = heme b(out) + ADP + phosphate + H(+). Part of the ABC transporter complex CcmAB involved in the biogenesis of c-type cytochromes; once thought to export heme, this seems not to be the case, but its exact role is uncertain. Responsible for energy coupling to the transport system. The polypeptide is Cytochrome c biogenesis ATP-binding export protein CcmA (Rhodopseudomonas palustris (strain HaA2)).